Consider the following 345-residue polypeptide: MYKVAVIKGDGIGPEVIDAAIRVVKSVTDKIKFYEFEGGLSVFKKYGVPIREEDLEEIRKMDAILFGATTTPFDVPRYKSLIITLRKELDLYANLRIIPNFKLRKEIIIVRENSEGLYSGEGAYDSNKVVDFRIITRKGAERIAKFAVKLAKDRSTFLTFVHKANILESDRFFRKIVLDIARKEDVKVREEIVDSFTIKLVKDPWNLGIILSENMFGDILSDLATIHAGSIGIVPSGNYGEDIALFEPIHGSAPDIAGKGIANPIGAILSAAMMLDYLGLDGSIIWKAVGRYVRRGNLTPDMEGRATTLEVTNGIISEIYRLDEYEIDEVWRDEVRLGRILLEIS.

69–71 (TTT) serves as a coordination point for NADH. Residues R86, R96, R111, Y118, K163, and N165 each coordinate (2R,3S)-homoisocitrate. N165 is an NADH binding site. Mg(2+)-binding residues include D194, D218, and D222. NADH contacts are provided by residues 251 to 255 (GSAPD) and N263.

This sequence belongs to the isocitrate and isopropylmalate dehydrogenases family. Mn(2+) is required as a cofactor. It depends on Mg(2+) as a cofactor.

The catalysed reaction is D-threo-isocitrate + NAD(+) = 2-oxoglutarate + CO2 + NADH. It carries out the reaction (2R,3S)-homoisocitrate + NAD(+) = 2-oxoadipate + CO2 + NADH. It functions in the pathway amino-acid biosynthesis; L-lysine biosynthesis via AAA pathway; L-alpha-aminoadipate from 2-oxoglutarate: step 4/5. Functionally, catalyzes the NAD(+)-dependent oxidative decarboxylation of homoisocitrate to 2-oxoadipate (alpha-ketoadipate), and of isocitrate to 2-oxoglutarate, at near equal efficiency. May thus play a dual role in glutamate and lysine biosynthesis in vivo. Preferentially uses NAD over NADP. This Pyrococcus horikoshii (strain ATCC 700860 / DSM 12428 / JCM 9974 / NBRC 100139 / OT-3) protein is Isocitrate/homoisocitrate dehydrogenase.